A 503-amino-acid polypeptide reads, in one-letter code: Cardiolipin synthase (503 aa).

3 helical membrane-spanning segments follow: residues 5-25, 30-50, and 59-79; these read LNVLAFFALLFAALYISRGFL, VGTLSVVFTLSVIFIGIIIFF, and LTWLLVLAAFPVVGFFFYLMF. PLD phosphodiesterase domains lie at 238-265 and 416-443; these read INYRNHRKIIVIDGVVGFVGGLNIGDEY and NRGFMHSKIIIVDHEIASIGTSNMDMRS. Residues H243, K245, D250, H421, K423, and D428 contribute to the active site.

It belongs to the phospholipase D family. Cardiolipin synthase subfamily.

It is found in the cell membrane. The catalysed reaction is 2 a 1,2-diacyl-sn-glycero-3-phospho-(1'-sn-glycerol) = a cardiolipin + glycerol. In terms of biological role, catalyzes the reversible phosphatidyl group transfer from one phosphatidylglycerol molecule to another to form cardiolipin (CL) (diphosphatidylglycerol) and glycerol. The chain is Cardiolipin synthase (cls) from Alkalihalophilus pseudofirmus (strain ATCC BAA-2126 / JCM 17055 / OF4) (Bacillus pseudofirmus).